Here is a 1089-residue protein sequence, read N- to C-terminus: Protein phosphatase 1 regulatory subunit 3A (1089 aa).

The disordered stretch occupies residues 32-57; it reads KATFKPGFSPQPSRRGSGSSEDMYLD. Low complexity predominate over residues 37 to 51; that stretch reads PGFSPQPSRRGSGSS. 2 positions are modified to phosphoserine; by GSK3: S40 and S44. Phosphoserine occurs at positions 48 and 51. T58 is subject to Phosphothreonine. A PP1-binding motif motif is present at residues 64–67; the sequence is RRVS. Position 67 is a phosphoserine; by PKA (S67). Residues 123–231 enclose the CBM21 domain; that stretch reads EQLQVQKAVL…NNNGTNYILV (109 aa). 3 disordered regions span residues 385 to 420, 479 to 501, and 566 to 649; these read FYHS…GDTS, HGDS…KVDN, and PCPS…SDIA. Residues 581-600 show a composition bias toward polar residues; sequence SGSNLEPGTSDLSSPRNFSP. Residues 602–614 show a composition bias toward basic and acidic residues; the sequence is TDDHLFQADRENS. Residues 615–625 are compositionally biased toward polar residues; it reads DSSNPENQNMN. S821 is subject to Phosphoserine. The disordered stretch occupies residues 949–968; that stretch reads IMKSGSGGERGGGPILQQKE. The span at 953 to 962 shows a compositional bias: gly residues; it reads GSGGERGGGP. The chain crosses the membrane as a helical span at residues 1047–1067; that stretch reads LLFLIFLATVYYYDLMIGLAF.

As to quaternary structure, interacts with PPP1CC catalytic subunit of PP1, and associates with glycogen. Phosphorylation at Ser-48 by ISPK stimulates the dephosphorylation of glycogen synthase and phosphorylase kinase. Skeletal muscle and heart.

It localises to the membrane. In terms of biological role, seems to act as a glycogen-targeting subunit for PP1. PP1 is essential for cell division, and participates in the regulation of glycogen metabolism, muscle contractility and protein synthesis. Plays an important role in glycogen synthesis but is not essential for insulin activation of glycogen synthase. This Mus musculus (Mouse) protein is Protein phosphatase 1 regulatory subunit 3A (Ppp1r3a).